Consider the following 172-residue polypeptide: Large ribosomal subunit protein uL10 (172 aa).

This sequence belongs to the universal ribosomal protein uL10 family. Part of the ribosomal stalk of the 50S ribosomal subunit. The N-terminus interacts with L11 and the large rRNA to form the base of the stalk. The C-terminus forms an elongated spine to which L12 dimers bind in a sequential fashion forming a multimeric L10(L12)X complex.

Its function is as follows. Forms part of the ribosomal stalk, playing a central role in the interaction of the ribosome with GTP-bound translation factors. This chain is Large ribosomal subunit protein uL10, found in Syntrophotalea carbinolica (strain DSM 2380 / NBRC 103641 / GraBd1) (Pelobacter carbinolicus).